Consider the following 154-residue polypeptide: 6,7-dimethyl-8-ribityllumazine synthase (154 aa).

5-amino-6-(D-ribitylamino)uracil contacts are provided by residues Phe22, 56 to 58, and 80 to 82; these read AFE and AVI. (2S)-2-hydroxy-3-oxobutyl phosphate is bound at residue 85–86; it reads AT. His88 (proton donor) is an active-site residue. Residue Phe113 coordinates 5-amino-6-(D-ribitylamino)uracil. Arg127 serves as a coordination point for (2S)-2-hydroxy-3-oxobutyl phosphate.

This sequence belongs to the DMRL synthase family.

The enzyme catalyses (2S)-2-hydroxy-3-oxobutyl phosphate + 5-amino-6-(D-ribitylamino)uracil = 6,7-dimethyl-8-(1-D-ribityl)lumazine + phosphate + 2 H2O + H(+). It participates in cofactor biosynthesis; riboflavin biosynthesis; riboflavin from 2-hydroxy-3-oxobutyl phosphate and 5-amino-6-(D-ribitylamino)uracil: step 1/2. Its function is as follows. Catalyzes the formation of 6,7-dimethyl-8-ribityllumazine by condensation of 5-amino-6-(D-ribitylamino)uracil with 3,4-dihydroxy-2-butanone 4-phosphate. This is the penultimate step in the biosynthesis of riboflavin. This is 6,7-dimethyl-8-ribityllumazine synthase from Clostridium botulinum (strain ATCC 19397 / Type A).